Reading from the N-terminus, the 648-residue chain is Threonine--tRNA ligase (648 aa).

One can recognise a TGS domain in the interval Met-1–Thr-62. The interval Asp-243–Pro-536 is catalytic. Zn(2+)-binding residues include Cys-336, His-387, and His-513.

This sequence belongs to the class-II aminoacyl-tRNA synthetase family. Homodimer. Zn(2+) serves as cofactor.

It localises to the cytoplasm. The enzyme catalyses tRNA(Thr) + L-threonine + ATP = L-threonyl-tRNA(Thr) + AMP + diphosphate + H(+). In terms of biological role, catalyzes the attachment of threonine to tRNA(Thr) in a two-step reaction: L-threonine is first activated by ATP to form Thr-AMP and then transferred to the acceptor end of tRNA(Thr). Also edits incorrectly charged L-seryl-tRNA(Thr). This Magnetococcus marinus (strain ATCC BAA-1437 / JCM 17883 / MC-1) protein is Threonine--tRNA ligase.